We begin with the raw amino-acid sequence, 478 residues long: Cytochrome c-552 (478 aa).

An N-terminal signal peptide occupies residues 1–26 (MARKTLRARRFFSLIFPFFFITSVYA). Histidine 94 lines the heme c pocket. 3 residues coordinate heme: cysteine 122, cysteine 125, and lysine 126. Heme c-binding residues include cysteine 160, cysteine 163, histidine 164, cysteine 209, cysteine 212, and histidine 213. The Ca(2+) site is built by glutamate 215, tyrosine 216, lysine 261, and glutamine 263. Tyrosine 216 lines the substrate pocket. Histidine 264 serves as a coordination point for substrate. Heme c contacts are provided by histidine 275, cysteine 282, cysteine 285, histidine 286, histidine 301, cysteine 314, cysteine 317, histidine 318, and histidine 393.

It belongs to the cytochrome c-552 family. The cofactor is Ca(2+). Heme c is required as a cofactor.

The protein localises to the periplasm. It carries out the reaction 6 Fe(III)-[cytochrome c] + NH4(+) + 2 H2O = 6 Fe(II)-[cytochrome c] + nitrite + 8 H(+). It functions in the pathway nitrogen metabolism; nitrate reduction (assimilation). Its function is as follows. Catalyzes the reduction of nitrite to ammonia, consuming six electrons in the process. This is Cytochrome c-552 from Salmonella agona (strain SL483).